Consider the following 432-residue polypeptide: MPQYLLKRHLRHLKSISVNNISLIDESKKIGSRVGFIPCFIVLEDTRSRKPFYVSELETGSLSSLHFTELVIPKEFELCTLFEIKIAAKIPSFLLRHDEDELWCFVAMHTVNLDELTYIGNQRDDHITMEQNLPMIEMIDGWYALPNKNIRYTGLQISPVANMNNKNRKRMCPFNSLVKLSKLTQYTGDMVEEKQISTNKIERLIKSTHNIGTGILDTYQENIKMIESRCEIKRQKLKRLKDQLSELDDGNELNDVDSNIETYRDEYANIYSKLSNAKEAIEKLQKKKLIQLINVFKNTFLFDKDVGLISFQFDDDEIEVEEFCKNLERVSIEQIYDRYNEYPKSVKIINAMLGFYSLFIVIYSYRIIQRKLPFDIVFQGSETIVGRKYRLSFPESRSTKSKEEFHIALRAFNENIMQFTQYLGHITQSFTI.

The N-linked (GlcNAc...) asparagine glycan is linked to Asn-20. Residues 216 to 287 adopt a coiled-coil conformation; that stretch reads LDTYQENIKM…KEAIEKLQKK (72 aa). Residues 348–365 traverse the membrane as a helical segment; that stretch reads IINAMLGFYSLFIVIYSY.

It belongs to the VPS38 family. As to quaternary structure, component of the VPS34 PI3-kinase complex II composed of VPS15, VPS30, VPS34 and VPS38.

Its subcellular location is the golgi apparatus. It localises to the trans-Golgi network membrane. The protein resides in the endosome membrane. In terms of biological role, involved in endosome-to-Golgi retrograde transport as part of the VPS34 PI3-kinase complex II. This complex is required for the endosome-to-Golgi retrieval of PEP1 and KEX2, and the recruitment of VPS5 and VPS7, two components of the retromer complex, to endosomal membranes (probably through generating a specific pool of phosphatidylinositol 3-phosphate allowing the recruitment of the retromer complex proteins to the endosome). Mediates the interaction between VPS30 and the VPS34-VPS15 core complex, leading to the recruitment of VPS30 to the membrane. This Candida glabrata (strain ATCC 2001 / BCRC 20586 / JCM 3761 / NBRC 0622 / NRRL Y-65 / CBS 138) (Yeast) protein is Vacuolar protein sorting-associated protein 38.